Here is an 82-residue protein sequence, read N- to C-terminus: RNA-binding protein Hfq (82 aa).

One can recognise a Sm domain in the interval 11-71; the sequence is DTFLNHVRKT…ISTIMPGAPI (61 aa).

Belongs to the Hfq family. In terms of assembly, homohexamer.

Its function is as follows. RNA chaperone that binds small regulatory RNA (sRNAs) and mRNAs to facilitate mRNA translational regulation in response to envelope stress, environmental stress and changes in metabolite concentrations. Also binds with high specificity to tRNAs. This chain is RNA-binding protein Hfq, found in Rhodopseudomonas palustris (strain TIE-1).